A 210-amino-acid chain; its full sequence is Thiamine-phosphate synthase (210 aa).

Residues 43 to 47 (QLREK) and asparagine 75 contribute to the 4-amino-2-methyl-5-(diphosphooxymethyl)pyrimidine site. Mg(2+) contacts are provided by aspartate 76 and aspartate 95. 4-amino-2-methyl-5-(diphosphooxymethyl)pyrimidine is bound at residue serine 114. 140–142 (TST) provides a ligand contact to 2-[(2R,5Z)-2-carboxy-4-methylthiazol-5(2H)-ylidene]ethyl phosphate. A 4-amino-2-methyl-5-(diphosphooxymethyl)pyrimidine-binding site is contributed by lysine 143. Residues glycine 170 and 190–191 (IS) contribute to the 2-[(2R,5Z)-2-carboxy-4-methylthiazol-5(2H)-ylidene]ethyl phosphate site.

This sequence belongs to the thiamine-phosphate synthase family. The cofactor is Mg(2+).

The catalysed reaction is 2-[(2R,5Z)-2-carboxy-4-methylthiazol-5(2H)-ylidene]ethyl phosphate + 4-amino-2-methyl-5-(diphosphooxymethyl)pyrimidine + 2 H(+) = thiamine phosphate + CO2 + diphosphate. It catalyses the reaction 2-(2-carboxy-4-methylthiazol-5-yl)ethyl phosphate + 4-amino-2-methyl-5-(diphosphooxymethyl)pyrimidine + 2 H(+) = thiamine phosphate + CO2 + diphosphate. The enzyme catalyses 4-methyl-5-(2-phosphooxyethyl)-thiazole + 4-amino-2-methyl-5-(diphosphooxymethyl)pyrimidine + H(+) = thiamine phosphate + diphosphate. It participates in cofactor biosynthesis; thiamine diphosphate biosynthesis; thiamine phosphate from 4-amino-2-methyl-5-diphosphomethylpyrimidine and 4-methyl-5-(2-phosphoethyl)-thiazole: step 1/1. Functionally, condenses 4-methyl-5-(beta-hydroxyethyl)thiazole monophosphate (THZ-P) and 2-methyl-4-amino-5-hydroxymethyl pyrimidine pyrophosphate (HMP-PP) to form thiamine monophosphate (TMP). This chain is Thiamine-phosphate synthase, found in Clostridioides difficile (strain 630) (Peptoclostridium difficile).